The sequence spans 324 residues: tRNA U34 carboxymethyltransferase (324 aa).

Carboxy-S-adenosyl-L-methionine is bound by residues K91, W105, K110, G130, 152 to 154 (DPS), 181 to 182 (IE), M196, Y200, and R315.

It belongs to the class I-like SAM-binding methyltransferase superfamily. CmoB family. In terms of assembly, homotetramer.

It carries out the reaction carboxy-S-adenosyl-L-methionine + 5-hydroxyuridine(34) in tRNA = 5-carboxymethoxyuridine(34) in tRNA + S-adenosyl-L-homocysteine + H(+). Catalyzes carboxymethyl transfer from carboxy-S-adenosyl-L-methionine (Cx-SAM) to 5-hydroxyuridine (ho5U) to form 5-carboxymethoxyuridine (cmo5U) at position 34 in tRNAs. This Aliivibrio fischeri (strain MJ11) (Vibrio fischeri) protein is tRNA U34 carboxymethyltransferase.